A 940-amino-acid polypeptide reads, in one-letter code: MAGAAAAVAAGAAAGAAAAAGSVSAPGRASAPPPPPPVYCVCRQPYDVNRFMIECDVCKDWFHGSCVGVEEHHAVDIDLYHCPDCAALHGSSLMKKRRNWHRHDYTEVDDGSKPVQAGTRAFVKELRSRVFPSADEIIVKMHGSQLTQRYLEKHGFDVPIMVPKLDDLGLRLPSPAFSVMDVERYVGGDKVIDVIDVARQADSKMTLHNYVKYFMNPDRPKVLNVISLEFSDTKMSELVEVPDIARKLSWVENYWPDDSVFPKPFVQKYCLMGVQDSYTDFHIDFGGTSVWYHVLWGEKIFYLIKPTNENLALYESWSSSVTQSEVFFGDKVDKCYKCVVKQGHTLFVPTGWIHAVLTSQDCMAFGGNFLHNLNIGMQLRCYEMEKRLKTPDLFKFPFFEAICWFVAKSLLETLKELKEDGFQPQSYLVQGVKALHTALKLWMKKELVSEHAFEIPDNVRPGHLIKELSKVIRAIEEENGKPVKSQGIPSVCPVSRPSNEASPPYHSRRKMRKLRDHNVRTPSNLDILELHTREVLKRLEMCPWEEDLLSSKLNGKFNKHLQPSSTVPEWRAKDNDLRLLLTNGRIIKDERQLFADRSLYTADSENEEDKKPTQNANMKTEQSSGREEAESQGSPKPLNRIFTSVRSELRSRPSEYSDGSDSEDSGPDCTALKINFATEDSESSGDEKKHEITSHFKEESDIVRNLLQKSQKPSRQEIPVKRECPTSTSTEEEAIQGMLSMAGLHYSSCLQRQIQSTDCSGEKNSLQDPSSCHGSNPEFRQLYRCNKPVEFGYHAKTEDQDLMTSSWNKQFDRTSRFNAQDLSRSQKHIKKESSSEINQKAQSRHCVDSNSSSIQNGKYTLNPSLVSCQISNGSLSPERPIGETSFSMPLHPTKRPASNPPPISNQATKGKRPKKGMATAKQRLGKILKLNRNGHARFFV.

The PHD-type zinc finger occupies 37 to 88 (PVYCVCRQPYDVNRFMIECDVCKDWFHGSCVGVEEHHAVDIDLYHCPDCAAL). Positions 97 to 114 (RRNWHRHDYTEVDDGSKP) are linker. A JmjC domain is found at 230–386 (FSDTKMSELV…MQLRCYEMEK (157 aa)). Thr279 lines the substrate pocket. 2 residues coordinate Fe cation: His282 and Asp284. Lys299 lines the substrate pocket. Residue His354 participates in Fe cation binding. Disordered regions lie at residues 483–509 (VKSQ…HSRR), 599–670 (LYTA…PDCT), 710–729 (SQKP…TSTS), 818–854 (NAQD…SSSI), and 876–920 (SPER…MATA). A Phosphoserine modification is found at Ser604. Positions 613 to 623 (TQNANMKTEQS) are enriched in polar residues. Residues 714-724 (SRQEIPVKREC) are compositionally biased toward basic and acidic residues.

It belongs to the JHDM1 histone demethylase family. JHDM1D subfamily. Fe(2+) is required as a cofactor.

It localises to the nucleus. It catalyses the reaction N(6),N(6)-dimethyl-L-lysyl(9)-[histone H3] + 2 2-oxoglutarate + 2 O2 = L-lysyl(9)-[histone H3] + 2 formaldehyde + 2 succinate + 2 CO2. The enzyme catalyses N(6),N(6)-dimethyl-L-lysyl(27)-[histone H3] + 2 2-oxoglutarate + 2 O2 = L-lysyl(27)-[histone H3] + 2 formaldehyde + 2 succinate + 2 CO2. It carries out the reaction N(6),N(6)-dimethyl-L-lysyl(36)-[histone H3] + 2-oxoglutarate + O2 = N(6)-methyl-L-lysyl(36)-[histone H3] + formaldehyde + succinate + CO2. The catalysed reaction is N(6)-methyl-L-lysyl(20)-[histone H4] + 2-oxoglutarate + O2 = L-lysyl(20)-[histone H4] + formaldehyde + succinate + CO2. Its function is as follows. Histone demethylase required for brain development. Specifically demethylates dimethylated 'Lys-9', 'Lys-27' and 'Lys-36' (H3K9me2, H3K27me2, H3K36me2, respectively) of histone H3 and monomethylated histone H4 'Lys-20' residue (H4K20Me1), thereby playing a central role in histone code. Specifically binds trimethylated 'Lys-4' of histone H3 (H3K4me3), affecting histone demethylase specificity: in presence of H3K4me3, it has no demethylase activity toward H3K9me2, while it has high activity toward H3K27me2. Demethylates H3K9me2 in absence of H3K4me3. Has activity toward H4K20Me1 only when nucleosome is used as a substrate and when not histone octamer is used as substrate. The chain is Lysine-specific demethylase 7A (Kdm7a) from Mus musculus (Mouse).